We begin with the raw amino-acid sequence, 310 residues long: tRNA-cytidine(32) 2-sulfurtransferase (310 aa).

The PP-loop motif signature appears at 45–50; the sequence is SGGKDS. Residues cysteine 120, cysteine 123, and cysteine 211 each coordinate [4Fe-4S] cluster.

Belongs to the TtcA family. Homodimer. The cofactor is Mg(2+). [4Fe-4S] cluster is required as a cofactor.

Its subcellular location is the cytoplasm. It carries out the reaction cytidine(32) in tRNA + S-sulfanyl-L-cysteinyl-[cysteine desulfurase] + AH2 + ATP = 2-thiocytidine(32) in tRNA + L-cysteinyl-[cysteine desulfurase] + A + AMP + diphosphate + H(+). It participates in tRNA modification. Catalyzes the ATP-dependent 2-thiolation of cytidine in position 32 of tRNA, to form 2-thiocytidine (s(2)C32). The sulfur atoms are provided by the cysteine/cysteine desulfurase (IscS) system. This chain is tRNA-cytidine(32) 2-sulfurtransferase, found in Shewanella putrefaciens (strain CN-32 / ATCC BAA-453).